Here is a 259-residue protein sequence, read N- to C-terminus: Activator of lactoyl-CoA dehydratase (259 aa).

Positions 125 and 164 each coordinate [4Fe-4S] cluster.

In terms of assembly, homodimer. [4Fe-4S] cluster is required as a cofactor.

In terms of biological role, required for the activation of lactoyl-CoA dehydratase. This protein is extremely sensitive towards oxygen. In Anaerotignum propionicum (Clostridium propionicum), this protein is Activator of lactoyl-CoA dehydratase (lcdC).